Consider the following 139-residue polypeptide: Putative lipoprotein LpqV (139 aa).

The N-terminal stretch at 1-25 is a signal peptide; the sequence is MRPSRYAPLLCAMVLALAWLSAVAG. A lipid anchor (N-palmitoyl cysteine) is attached at Cys26. Cys26 is lipidated: S-diacylglycerol cysteine.

It is found in the cell membrane. This chain is Putative lipoprotein LpqV (lpqV), found in Mycobacterium bovis (strain ATCC BAA-935 / AF2122/97).